The chain runs to 421 residues: Glutamate-1-semialdehyde 2,1-aminomutase 1 (421 aa).

Position 258 is an N6-(pyridoxal phosphate)lysine (lysine 258).

It belongs to the class-III pyridoxal-phosphate-dependent aminotransferase family. HemL subfamily. It depends on pyridoxal 5'-phosphate as a cofactor.

The protein resides in the cytoplasm. The enzyme catalyses (S)-4-amino-5-oxopentanoate = 5-aminolevulinate. Its pathway is porphyrin-containing compound metabolism; protoporphyrin-IX biosynthesis; 5-aminolevulinate from L-glutamyl-tRNA(Glu): step 2/2. This Cenarchaeum symbiosum (strain A) protein is Glutamate-1-semialdehyde 2,1-aminomutase 1.